A 189-amino-acid chain; its full sequence is Leucine repeat adapter protein 25 (189 aa).

S28 carries the post-translational modification Phosphoserine. The interval 54 to 83 (ELSRAARAPDGPRHAAGAANAGPAAGPRRP) is disordered. The segment covering 67–83 (HAAGAANAGPAAGPRRP) has biased composition (low complexity). The stretch at 86 to 114 (LDSALAALRKEMVGLRQLDMSLLCQLWGL) is one LRR repeat. The segment at 141–175 (DSSYPPDAGLSDDEEPPDASLPPDPPPLTVPQTHN) is disordered. Residues 159–169 (ASLPPDPPPLT) show a composition bias toward pro residues. S188 carries the post-translational modification Phosphoserine.

It belongs to the FAM89 family. In terms of assembly, interacts with SKI. Interacts (via LRR repeat) with CDC42BPA (via AGC-kinase C-terminal domain), CDC42BPB (via AGC-kinase C-terminal domain) and LIMK1 (via LIM zinc-binding domains). Forms a tripartite complex with CDC42BPA, CDC42BPB and LIMK1.

The protein resides in the cytoplasm. It localises to the cell projection. Its subcellular location is the lamellipodium. Its function is as follows. Negatively regulates TGF-beta-induced signaling; in cooperation with SKI prevents the translocation of SMAD2 from the nucleus to the cytoplasm in response to TGF-beta. Acts as an adapter that mediates the specific recognition of LIMK1 by CDC42BPA and CDC42BPB in the lamellipodia. LRAP25-mediated CDC42BPA/CDC42BPB targeting to LIMK1 and the lamellipodium results in LIMK1 activation and the subsequent phosphorylation of CFL1 which is important for lamellipodial F-actin regulation. The chain is Leucine repeat adapter protein 25 (FAM89B) from Homo sapiens (Human).